The following is a 566-amino-acid chain: Chaperone Ric-8 (566 aa).

It belongs to the synembryn family. In terms of assembly, interacts with GDP-bound G(i)-alpha protein. Does not interact with G-alpha proteins when they are in complex with subunits beta and gamma. Interacts with Frq2 in a Ca(2+)-independent manner but does not interact with Frq1.

Its subcellular location is the cytoplasm. The protein resides in the cell cortex. The protein localises to the presynapse. Chaperone that specifically binds and folds some, but not all, nascent G alpha proteins prior to G protein heterotrimer formation, promoting their stability and activity. Also acts as a guanine nucleotide exchange factor (GEF) for G alpha proteins by stimulating exchange of bound GDP for free GTP. Plays a key role in asymmetric spindle positioning, a step for asymmetric cell division that generates cell diversity during development by activating G(i) alpha protein independently of G-protein coupled receptors. Required during gastrulation and sensory organ precursor (SOP) formation. Plays a role in positively regulating synapse number and neurotransmitter release. The protein is Chaperone Ric-8 (ric8a) of Drosophila pseudoobscura pseudoobscura (Fruit fly).